Reading from the N-terminus, the 313-residue chain is Methionyl-tRNA formyltransferase (313 aa).

A (6S)-5,6,7,8-tetrahydrofolate-binding site is contributed by 113–116; sequence SLLP.

It belongs to the Fmt family.

The enzyme catalyses L-methionyl-tRNA(fMet) + (6R)-10-formyltetrahydrofolate = N-formyl-L-methionyl-tRNA(fMet) + (6S)-5,6,7,8-tetrahydrofolate + H(+). In terms of biological role, attaches a formyl group to the free amino group of methionyl-tRNA(fMet). The formyl group appears to play a dual role in the initiator identity of N-formylmethionyl-tRNA by promoting its recognition by IF2 and preventing the misappropriation of this tRNA by the elongation apparatus. The protein is Methionyl-tRNA formyltransferase of Francisella tularensis subsp. novicida (strain U112).